Consider the following 262-residue polypeptide: tRNA (guanine-N(1)-)-methyltransferase (262 aa).

S-adenosyl-L-methionine is bound by residues Gly112 and 132 to 137 (IGDYIL).

It belongs to the RNA methyltransferase TrmD family. Homodimer.

The protein resides in the cytoplasm. It carries out the reaction guanosine(37) in tRNA + S-adenosyl-L-methionine = N(1)-methylguanosine(37) in tRNA + S-adenosyl-L-homocysteine + H(+). In terms of biological role, specifically methylates guanosine-37 in various tRNAs. This Desulfatibacillum aliphaticivorans protein is tRNA (guanine-N(1)-)-methyltransferase.